Here is a 432-residue protein sequence, read N- to C-terminus: Acyl-CoA dehydrogenase AFT10-1 (432 aa).

This sequence belongs to the acyl-CoA dehydrogenase family. Requires FAD as cofactor.

Its pathway is mycotoxin biosynthesis. Acyl-CoA dehydrogenase; part of the gene clusters that mediate the biosynthesis of the host-selective toxins (HSTs) AF-toxins responsible for Alternaria black spot of strawberry disease by the strawberry pathotype. AF-toxin I and III are valine derivatives of 2,3-dyhydroxy-isovaleric acid and 2-hydroxy-isovaleric acid respectively, while AF II is an isoleucine derivative of 2-hydroxy-valeric acid. These derivatives are bound to a 9,10-epoxy-8-hydroxy-9-methyl-decatrienoic acid (EDA) moiety. On cellular level, AF-toxins affect plasma membrane of susceptible cells and cause a sudden increase in loss of K(+) after a few minutes of toxin treatment. The aldo-keto reductase AFTS1 catalyzes the conversion of 2-keto-isovaleric acid (2-KIV) to 2-hydroxy-isovaleric acid (2-HIV) by reduction of its ketone to an alcohol. The acyl-CoA ligase AFT1, the hydrolase AFT2 and the enoyl-CoA hydratases AFT3 and AFT6, but also the polyketide synthase AFT9, the acyl-CoA dehydrogenase AFT10, the cytochrome P450 monooxygenase AFT11 and the oxidoreductase AFT12 are all involved in the biosynthesis of the AK-, AF- and ACT-toxin common EDA structural moiety. The exact function of each enzyme, and of additional enzymes identified within the AF-toxin clusters have still to be determined. This is Acyl-CoA dehydrogenase AFT10-1 from Alternaria alternata (Alternaria rot fungus).